Reading from the N-terminus, the 451-residue chain is Serine/threonine-protein phosphatase 2A 55 kDa regulatory subunit B delta isoform (451 aa).

WD repeat units follow at residues 30 to 69 (AEAD…KSRP), 95 to 136 (EIEE…KRAE), 179 to 217 (AHTY…RSFN), 228 to 268 (ELTE…LCDR), 287 to 325 (EIIS…RPVE), 342 to 383 (ENDC…DITL), and 418 to 451 (DFNK…DKIN).

This sequence belongs to the phosphatase 2A regulatory subunit B family. As to quaternary structure, PP2A consists of a common heterodimeric core enzyme, composed of a 36 kDa catalytic subunit (subunit C) and a 65 kDa constant regulatory subunit (PR65 or subunit A), that associates with a variety of regulatory subunits.

It is found in the cytoplasm. In terms of biological role, substrate-recognition subunit of protein phosphatase 2A (PP2A) that plays a key role in cell cycle by controlling mitosis entry and exit. The activity of PP2A complexes containing PPP2R2D (PR55-delta) fluctuate during the cell cycle: the activity is high in interphase and low in mitosis. This chain is Serine/threonine-protein phosphatase 2A 55 kDa regulatory subunit B delta isoform (PPP2R2D), found in Gallus gallus (Chicken).